Consider the following 216-residue polypeptide: Lipoprotein signal peptidase (216 aa).

The disordered stretch occupies residues 1 to 21; sequence MATSRTAPTRAPSLRSSPALE. The next 3 membrane-spanning stretches (helical) occupy residues 31–51, 89–109, and 114–134; these read VGAL…DQIT, GSTW…IWYA, and STAW…NLTD. Catalysis depends on residues D149 and D164. A helical transmembrane segment spans residues 159 to 179; that stretch reads IFNLADVAIVFSMGLFLLLTL. Residues 189-216 are disordered; the sequence is QRDEGAGVSSASPAGDESAADKPENLSA. Basic and acidic residues predominate over residues 207–216; the sequence is AADKPENLSA.

This sequence belongs to the peptidase A8 family.

The protein localises to the cell membrane. It catalyses the reaction Release of signal peptides from bacterial membrane prolipoproteins. Hydrolyzes -Xaa-Yaa-Zaa-|-(S,diacylglyceryl)Cys-, in which Xaa is hydrophobic (preferably Leu), and Yaa (Ala or Ser) and Zaa (Gly or Ala) have small, neutral side chains.. Its pathway is protein modification; lipoprotein biosynthesis (signal peptide cleavage). Functionally, this protein specifically catalyzes the removal of signal peptides from prolipoproteins. This Leifsonia xyli subsp. xyli (strain CTCB07) protein is Lipoprotein signal peptidase.